A 303-amino-acid polypeptide reads, in one-letter code: 1-acyl-sn-glycerol-3-phosphate acyltransferase (303 aa).

An HXXXXD motif motif is present at residues 82–87; sequence HQSTLD. The disordered stretch occupies residues 278 to 303; it reads NEPVPSVSISNDVNTHNEGSSVKKMH. The span at 284 to 297 shows a compositional bias: polar residues; sequence VSISNDVNTHNEGS.

The protein belongs to the 1-acyl-sn-glycerol-3-phosphate acyltransferase family.

The protein localises to the lipid droplet. The catalysed reaction is a 1-acyl-sn-glycero-3-phosphate + an acyl-CoA = a 1,2-diacyl-sn-glycero-3-phosphate + CoA. It catalyses the reaction a 1-acyl-sn-glycero-3-phosphocholine + an acyl-CoA = a 1,2-diacyl-sn-glycero-3-phosphocholine + CoA. The enzyme catalyses a 1-acyl-sn-glycero-3-phosphoethanolamine + an acyl-CoA = a 1,2-diacyl-sn-glycero-3-phosphoethanolamine + CoA. It carries out the reaction 1-hexadecanoyl-sn-glycero-3-phosphate + (9Z)-octadecenoyl-CoA = 1-hexadecanoyl-2-(9Z-octadecenoyl)-sn-glycero-3-phosphate + CoA. The catalysed reaction is 1-octadecanoyl-sn-glycero-3-phosphate + (9Z)-octadecenoyl-CoA = 1-octadecanoyl-2-(9Z-octadecenoyl)-sn-glycero-3-phosphate + CoA. It catalyses the reaction 1-(9Z-octadecenoyl)-sn-glycero-3-phospho-L-serine + (9Z)-octadecenoyl-CoA = 1,2-di-(9Z)-octadecenoyl-sn-glycero-3-phospho-L-serine + CoA. The enzyme catalyses a 1-acyl-sn-glycero-3-phospho-(1D-myo-inositol) + (9Z)-octadecenoyl-CoA = a 1-acyl-2-(9Z-octadecenoyl)-sn-glycero-3-phospho-(1D-myo-inositol) + CoA. It carries out the reaction 1-heptadecanoyl-sn-glycero-3-phosphate + (9Z)-octadecenoyl-CoA = 1-heptadecanoyl-2-(9Z)-octadecenoyl-sn-glycero-3-phosphate + CoA. The catalysed reaction is 1-heptadecanoyl-sn-glycero-3-phosphate + dodecanoyl-CoA = 1-heptadecanoyl-2-dodecanoyl-sn-glycero-3-phosphate + CoA. It catalyses the reaction 1-heptadecanoyl-sn-glycero-3-phosphate + tetradecanoyl-CoA = 1-heptadecanoyl-2-tetradecanoyl-sn-glycero-3-phosphate + CoA. The protein operates within phospholipid metabolism; CDP-diacylglycerol biosynthesis; CDP-diacylglycerol from sn-glycerol 3-phosphate: step 2/3. Acyltransferase that catalyzes the sn-2-specific, acyl-CoA-dependent acylation of lysophosphatidic acid (LPA) to phosphatidic acid (PA) in lipid particles. Together with ALE1, plays a central role in PA biosynthesis. PA is the intermediate, from which all glycerophospholipids are synthesized. Can also acylate lysophosphoinositol (LPI) and lysophosphoserine (LPS). The fatty acyl substrates include 18:1-acyl-CoA, 14:0-acyl-CoA, 12:0-acyl-CoA and 10:0-acyl-CoA. This is 1-acyl-sn-glycerol-3-phosphate acyltransferase from Saccharomyces cerevisiae (strain ATCC 204508 / S288c) (Baker's yeast).